A 424-amino-acid chain; its full sequence is O-methyltransferase bfoD (424 aa).

D275 lines the S-adenosyl-L-methionine pocket. The Proton acceptor role is filled by H326.

Belongs to the class I-like SAM-binding methyltransferase superfamily. Cation-independent O-methyltransferase family.

The protein operates within secondary metabolite biosynthesis. In terms of biological role, cytochrome P450 monooxygenase; part of the gene cluster that mediates the biosynthesis of bifonsecin B, a dimeric gamma-naphthopyrone. The first step in the biosynthesis of bifonsecin B is the production of gamma-naphthopyrone precursor YWA1 by the non-reducing polyketide synthase albA, via condensation of one acetyl-CoA starter unit with 6 malonyl-CoA units. YWA1 is then methylated by bfoE at position C-6 to yield foncesin which is further methylated at position C-8 by bfoD to produce fonsecin B. A key enzyme in the biosynthetic pathway is the cytochrome P450 monooxygenase bfoB which catalyzes the oxidative dimerization of fonsecin B to bifonsecin B. Bfob also catalyzes the oxidative dimerization of rubrofusarin B into nigerone. The stereoselectivity of bfoB is influenced by the two natural monomeric substrates; homodimerization of fonsecin B yields a stereochemically pure biaryl, M-foncerine B, while rubrofusarin B yields a mixture of enantiomers M- and P-nigerone. In Aspergillus brasiliensis (strain CBS 101740 / IMI 381727 / IBT 21946), this protein is O-methyltransferase bfoD.